The primary structure comprises 1192 residues: Probable ATP-dependent RNA helicase kurz (1192 aa).

The segment at 170-214 is disordered; the sequence is ELQAKRKNPNVISVEEDDEDSSSSDEDDEEAPAQSAPIAIPTPVS. Acidic residues predominate over residues 183 to 200; that stretch reads VEEDDEDSSSSDEDDEEA. The region spanning 270–436 is the Helicase ATP-binding domain; the sequence is METINENPIV…TRLFKIPPPL (167 aa). 283-290 is a binding site for ATP; that stretch reads GETGSGKT. The DEAH box signature appears at 379–382; that stretch reads DEAH. The interval 504 to 529 is disordered; it reads APTKDVAKNGKVSEEEKEETIDDAAS. The segment covering 505–517 has biased composition (basic and acidic residues); it reads PTKDVAKNGKVSE. Serine 529 carries the phosphoserine modification. A Phosphothreonine modification is found at threonine 530. The Helicase C-terminal domain occupies 540–746; it reads DMKRVIRNIR…DLMLQMRCMG (207 aa). Residues 567-583 show a composition bias toward basic and acidic residues; the sequence is DDYKLPGDDTEADMHEQ. The disordered stretch occupies residues 567–612; the sequence is DDYKLPGDDTEADMHEQPDEDDEQEGLEEDNDDELGLEDESGMGSG. Positions 584–607 are enriched in acidic residues; it reads PDEDDEQEGLEEDNDDELGLEDES.

It belongs to the DEAD box helicase family. DEAH subfamily.

The enzyme catalyses ATP + H2O = ADP + phosphate + H(+). The sequence is that of Probable ATP-dependent RNA helicase kurz (kz) from Drosophila melanogaster (Fruit fly).